The sequence spans 255 residues: Small ribosomal subunit protein uS2 (255 aa).

The segment at 232 to 255 (ASGRDLGASEEVPVEPALEEASEA) is disordered.

The protein belongs to the universal ribosomal protein uS2 family.

The protein is Small ribosomal subunit protein uS2 of Rhizobium meliloti (strain 1021) (Ensifer meliloti).